A 221-amino-acid chain; its full sequence is Protein GrpE (221 aa).

The disordered stretch occupies residues 1–43 (MFTNPFGRKKDMSDDQKKNNQPDTEADNAENIKFAADDTELRA). The span at 8-20 (RKKDMSDDQKKNN) shows a compositional bias: basic and acidic residues.

The protein belongs to the GrpE family. As to quaternary structure, homodimer.

It localises to the cytoplasm. In terms of biological role, participates actively in the response to hyperosmotic and heat shock by preventing the aggregation of stress-denatured proteins, in association with DnaK and GrpE. It is the nucleotide exchange factor for DnaK and may function as a thermosensor. Unfolded proteins bind initially to DnaJ; upon interaction with the DnaJ-bound protein, DnaK hydrolyzes its bound ATP, resulting in the formation of a stable complex. GrpE releases ADP from DnaK; ATP binding to DnaK triggers the release of the substrate protein, thus completing the reaction cycle. Several rounds of ATP-dependent interactions between DnaJ, DnaK and GrpE are required for fully efficient folding. This is Protein GrpE from Deinococcus radiodurans (strain ATCC 13939 / DSM 20539 / JCM 16871 / CCUG 27074 / LMG 4051 / NBRC 15346 / NCIMB 9279 / VKM B-1422 / R1).